The chain runs to 145 residues: Superoxide dismutase [Mn/Fe] (145 aa).

H10 and H64 together coordinate Fe(3+). The Mn(2+) site is built by H10 and H64.

This sequence belongs to the iron/manganese superoxide dismutase family. The cofactor is Mn(2+). Fe(3+) is required as a cofactor.

It catalyses the reaction 2 superoxide + 2 H(+) = H2O2 + O2. In terms of biological role, destroys superoxide anion radicals which are normally produced within the cells and which are toxic to biological systems. Catalyzes the dismutation of superoxide anion radicals into O2 and H2O2 by successive reduction and oxidation of the transition metal ion at the active site. The protein is Superoxide dismutase [Mn/Fe] (sodA) of Streptococcus alactolyticus.